Consider the following 329-residue polypeptide: Ethylene-responsive transcription factor ERF117 (329 aa).

2 disordered regions span residues 25–51 (DATD…KPPK) and 71–90 (NSTG…FKGV). Residues 71 to 86 (NSTGNKAAGNRKTSSG) are compositionally biased toward polar residues. A DNA-binding region (AP2/ERF) is located at residues 86–143 (GFKGVRRRPWGKFAAEIRNPFEKKRKWLGTFPTEEEAAEAYQKSKREFDERLGLVKQE).

The protein belongs to the AP2/ERF transcription factor family. ERF subfamily.

The protein resides in the nucleus. Its function is as follows. Probably acts as a transcriptional activator. Binds to the GCC-box pathogenesis-related promoter element. May be involved in the regulation of gene expression by stress factors and by components of stress signal transduction pathways. The sequence is that of Ethylene-responsive transcription factor ERF117 (ERF117) from Arabidopsis thaliana (Mouse-ear cress).